Reading from the N-terminus, the 163-residue chain is Anaerobic nitrite reductase HB1 (163 aa).

Positions valine 8 to lysine 157 constitute a Globin domain. A Homodimerization motif is present at residues glutamate 41 to serine 45. Heme b is bound by residues serine 51, lysine 65, histidine 69, lysine 99, threonine 103, and histidine 104. The Homodimerization motif lies at aspartate 111–glutamate 123.

The protein belongs to the plant globin family. Homodimer. It depends on heme b as a cofactor.

It is found in the cytoplasm. It localises to the nucleus. The enzyme catalyses Fe(III)-heme b-[protein] + nitric oxide + H2O = Fe(II)-heme b-[protein] + nitrite + 2 H(+). Functionally, phytoglobin that reduces nitrite to nitric oxide (NO) under anoxic conditions (e.g. during flooding or in waterlogged soil). May not function as an oxygen storage or transport protein. Has an unusually high affinity for O(2) through an hexacoordinate heme iron because of a very low dissociation constant. This is Anaerobic nitrite reductase HB1 from Gossypium hirsutum (Upland cotton).